Reading from the N-terminus, the 450-residue chain is 3-phosphoshikimate 1-carboxyvinyltransferase (450 aa).

3 residues coordinate 3-phosphoshikimate: K28, S29, and R33. A phosphoenolpyruvate-binding site is contributed by K28. Phosphoenolpyruvate contacts are provided by G100 and R128. The 3-phosphoshikimate site is built by S173, Q175, D326, and K353. Position 175 (Q175) interacts with phosphoenolpyruvate. Residue D326 is the Proton acceptor of the active site. The phosphoenolpyruvate site is built by R357 and R402.

Belongs to the EPSP synthase family. As to quaternary structure, monomer.

The protein resides in the cytoplasm. The catalysed reaction is 3-phosphoshikimate + phosphoenolpyruvate = 5-O-(1-carboxyvinyl)-3-phosphoshikimate + phosphate. Its pathway is metabolic intermediate biosynthesis; chorismate biosynthesis; chorismate from D-erythrose 4-phosphate and phosphoenolpyruvate: step 6/7. In terms of biological role, catalyzes the transfer of the enolpyruvyl moiety of phosphoenolpyruvate (PEP) to the 5-hydroxyl of shikimate-3-phosphate (S3P) to produce enolpyruvyl shikimate-3-phosphate and inorganic phosphate. The chain is 3-phosphoshikimate 1-carboxyvinyltransferase from Brucella canis (strain ATCC 23365 / NCTC 10854 / RM-666).